We begin with the raw amino-acid sequence, 173 residues long: Placenta-specific protein 1 (173 aa).

The N-terminal stretch at 1-23 (MKLIKFLGGVVFFTLMFSGYSEQ) is a signal peptide.

The protein belongs to the PLAC1 family.

The protein resides in the secreted. Its function is as follows. May play a role in placental development. The chain is Placenta-specific protein 1 from Rattus norvegicus (Rat).